We begin with the raw amino-acid sequence, 508 residues long: Light-independent protochlorophyllide reductase subunit B (508 aa).

A [4Fe-4S] cluster-binding site is contributed by aspartate 36. The active-site Proton donor is the aspartate 294. 429–430 (GM) is a substrate binding site.

Belongs to the ChlB/BchB/BchZ family. Protochlorophyllide reductase is composed of three subunits; ChlL, ChlN and ChlB. Forms a heterotetramer of two ChlB and two ChlN subunits. [4Fe-4S] cluster serves as cofactor.

The catalysed reaction is chlorophyllide a + oxidized 2[4Fe-4S]-[ferredoxin] + 2 ADP + 2 phosphate = protochlorophyllide a + reduced 2[4Fe-4S]-[ferredoxin] + 2 ATP + 2 H2O. It participates in porphyrin-containing compound metabolism; chlorophyll biosynthesis (light-independent). Functionally, component of the dark-operative protochlorophyllide reductase (DPOR) that uses Mg-ATP and reduced ferredoxin to reduce ring D of protochlorophyllide (Pchlide) to form chlorophyllide a (Chlide). This reaction is light-independent. The NB-protein (ChlN-ChlB) is the catalytic component of the complex. In Acaryochloris marina (strain MBIC 11017), this protein is Light-independent protochlorophyllide reductase subunit B.